The sequence spans 116 residues: Large ribosomal subunit protein uL18 (116 aa).

The protein belongs to the universal ribosomal protein uL18 family. In terms of assembly, part of the 50S ribosomal subunit; part of the 5S rRNA/L5/L18/L25 subcomplex. Contacts the 5S and 23S rRNAs.

This is one of the proteins that bind and probably mediate the attachment of the 5S RNA into the large ribosomal subunit, where it forms part of the central protuberance. This Acholeplasma laidlawii (strain PG-8A) protein is Large ribosomal subunit protein uL18.